A 193-amino-acid polypeptide reads, in one-letter code: ATP-dependent Clp protease proteolytic subunit 2 (193 aa).

Serine 98 (nucleophile) is an active-site residue. Histidine 123 is an active-site residue.

This sequence belongs to the peptidase S14 family. As to quaternary structure, fourteen ClpP subunits assemble into 2 heptameric rings which stack back to back to give a disk-like structure with a central cavity, resembling the structure of eukaryotic proteasomes.

It localises to the cytoplasm. The catalysed reaction is Hydrolysis of proteins to small peptides in the presence of ATP and magnesium. alpha-casein is the usual test substrate. In the absence of ATP, only oligopeptides shorter than five residues are hydrolyzed (such as succinyl-Leu-Tyr-|-NHMec, and Leu-Tyr-Leu-|-Tyr-Trp, in which cleavage of the -Tyr-|-Leu- and -Tyr-|-Trp bonds also occurs).. In terms of biological role, cleaves peptides in various proteins in a process that requires ATP hydrolysis. Has a chymotrypsin-like activity. Plays a major role in the degradation of misfolded proteins. This chain is ATP-dependent Clp protease proteolytic subunit 2, found in Bacillus cereus (strain ATCC 14579 / DSM 31 / CCUG 7414 / JCM 2152 / NBRC 15305 / NCIMB 9373 / NCTC 2599 / NRRL B-3711).